Reading from the N-terminus, the 407-residue chain is Lysosome-associated membrane glycoprotein 1 (407 aa).

The signal sequence occupies residues 1-21 (MAAPGARRPLLLLLLAGLAHS). The interval 22-189 (APALFEVKDN…SKEETRCPQD (168 aa)) is first lumenal domain. Residues 22-371 (APALFEVKDN…VEECVQDGNN (350 aa)) lie on the Lumenal side of the membrane. Asn-32, Asn-59, Asn-71, Asn-79, Asn-102, Asn-116, Asn-125, Asn-145, Asn-160, and Asn-178 each carry an N-linked (GlcNAc...) asparagine glycan. Cys-36 and Cys-75 form a disulfide bridge. Residues Cys-150 and Cys-186 are joined by a disulfide bond. The tract at residues 180-211 (SKEETRCPQDQPSPTTGPPSPSPPLVPTNPSV) is disordered. The interval 190–219 (QPSPTTGPPSPSPPLVPTNPSVSKYNVTGD) is hinge. The span at 194–206 (TTGPPSPSPPLVP) shows a compositional bias: pro residues. Residues Asn-215, Asn-220, Asn-233, Asn-241, Asn-271, Asn-283, Asn-297, and Asn-312 are each glycosylated (N-linked (GlcNAc...) asparagine). Residues 220 to 371 (NGTCLLASMA…VEECVQDGNN (152 aa)) form a second lumenal domain region. A disulfide bridge links Cys-223 with Cys-260. Cys-328 and Cys-365 form a disulfide bridge. The chain crosses the membrane as a helical span at residues 372–395 (MLIPIAVGGALAGLVLIVLIAYLI). The Cytoplasmic segment spans residues 396 to 407 (GRKRSHAGYQTI).

It belongs to the LAMP family. As to quaternary structure, interacts with ABCB9; this interaction strongly stabilizes ABCB9 and protects ABCB9 against lysosomal degradation. Interacts with FURIN. Interacts with TMEM175; inhibiting the proton channel activity of TMEM175. O- and N-glycosylated; some of the N-glycans attached to LAMP-1 are polylactosaminoglycans.

The protein localises to the lysosome membrane. The protein resides in the endosome membrane. It is found in the late endosome membrane. It localises to the cell membrane. Its subcellular location is the cytolytic granule membrane. Functionally, lysosomal membrane glycoprotein which plays an important role in lysosome biogenesis, lysosomal pH regulation, autophagy and cholesterol homeostasis. Acts as an important regulator of lysosomal lumen pH regulation by acting as a direct inhibitor of the proton channel TMEM175, facilitating lysosomal acidification for optimal hydrolase activity. Also plays an important role in NK-cells cytotoxicity. Mechanistically, participates in cytotoxic granule movement to the cell surface and perforin trafficking to the lytic granule. In addition, protects NK-cells from degranulation-associated damage induced by their own cytotoxic granule content. Presents carbohydrate ligands to selectins. The polypeptide is Lysosome-associated membrane glycoprotein 1 (Lamp1) (Rattus norvegicus (Rat)).